Reading from the N-terminus, the 567-residue chain is Protein phosphatase 1 regulatory inhibitor subunit 16B (567 aa).

Residues 15–55 (EKVPTLERLRAAQKRRAQQLKKWAQYEQDLQHRKRKHERKR) are a coiled coil. At S69 the chain carries Phosphoserine. ANK repeat units lie at residues 100–129 (DGLT…NVNA), 133–162 (ELWT…DLLA), 228–257 (QGAT…RVDV), and 261–290 (DGWE…SLSA). Residues S333, S337, and S350 each carry the phosphoserine modification. The tract at residues 378–403 (RTSTYNGDIRETRTDQENKDPNPRLE) is disordered. The span at 385–403 (DIRETRTDQENKDPNPRLE) shows a compositional bias: basic and acidic residues. S476 carries the post-translational modification Phosphoserine. Positions 504-515 (SSMARTGESSSE) are enriched in polar residues. The tract at residues 504–525 (SSMARTGESSSEGKAPLIGGRT) is disordered. Residues 530–559 (SNGTSVYYTVTSGDPPLLKFKAPIEEMEEK) form an ANK 5 repeat. The S-palmitoyl cysteine moiety is linked to residue C563. Cysteine methyl ester is present on C564. C564 carries the S-farnesyl cysteine lipid modification. Positions 565–567 (RIS) are cleaved as a propeptide — removed in mature form.

As to quaternary structure, interacts with PPP1CA, PPP1CB and MSN. Interacts (via its fourth ankyrin repeat) with the mature dimeric form of RPSA/LAMR1. Interacts with EEF1A1. Interacts with PTEN. Interacts with ECE1. In terms of processing, phosphorylated by PKA and, after PKA priming, by GSK3B. Phosphorylation by GSK3B reduces its association with PP1C and enhances PP1C activity. Dephosphorylation by its associated PP1C results in enhanced association with PP1C, but reduced PP1C activity.

Its subcellular location is the cell membrane. It localises to the nucleus. The protein localises to the cell projection. In terms of biological role, regulator of protein phosphatase 1 (PP1) that acts as a positive regulator of pulmonary endothelial cell (EC) barrier function. Involved in the regulation of the PI3K/AKT signaling pathway, angiogenesis and endothelial cell proliferation. Regulates angiogenesis and endothelial cell proliferation through the control of ECE1 dephosphorylation, trafficking and activity. Protects the endothelial barrier from lipopolysaccharide (LPS)-induced vascular leakage. Involved in the regulation of endothelial cell filopodia extension. May be a downstream target for TGF-beta1 signaling cascade in endothelial cells. Involved in PKA-mediated moesin dephosphorylation which is important in EC barrier protection against thrombin stimulation. Promotes the interaction of PPP1CA with RPSA/LAMR1 and in turn facilitates the dephosphorylation of RPSA/LAMR1. Involved in the dephosphorylation of EEF1A1. This chain is Protein phosphatase 1 regulatory inhibitor subunit 16B (PPP1R16B), found in Homo sapiens (Human).